We begin with the raw amino-acid sequence, 102 residues long: Large ribosomal subunit protein bL21 (102 aa).

The protein belongs to the bacterial ribosomal protein bL21 family. As to quaternary structure, part of the 50S ribosomal subunit. Contacts protein L20.

This protein binds to 23S rRNA in the presence of protein L20. The chain is Large ribosomal subunit protein bL21 from Staphylococcus haemolyticus (strain JCSC1435).